A 551-amino-acid chain; its full sequence is Rqc2 homolog RqcH (551 aa).

This sequence belongs to the NEMF family. As to quaternary structure, associates with stalled 50S ribosomal subunits, binds to RqcP. Interacts with human fibronectin.

The protein localises to the secreted. The protein resides in the capsule. Its subcellular location is the cell surface. It localises to the cytoplasm. Functionally, key component of the ribosome quality control system (RQC), a ribosome-associated complex that mediates the extraction of incompletely synthesized nascent chains from stalled ribosomes and their subsequent degradation. RqcH recruits Ala-charged tRNA, and with RqcP directs the elongation of stalled nascent chains on 50S ribosomal subunits, leading to non-templated C-terminal alanine extensions (Ala tail). The Ala tail promotes nascent chain degradation. May add between 1 and at least 8 Ala residues. Binds to stalled 50S ribosomal subunits. Its function is as follows. Plays a significant role in virulence. Recombinant protein binds to immobilized human fibronectin; binding is saturable and competed by heparin. Purified protein inhibits binding of whole cells to fibronectin. This Streptococcus pneumoniae serotype 2 (strain D39 / NCTC 7466) protein is Rqc2 homolog RqcH.